Consider the following 279-residue polypeptide: Energy-coupling factor transporter ATP-binding protein EcfA1 (279 aa).

Residues 6–240 (VRLEHVFYKY…ADAMREIGLG (235 aa)) form the ABC transporter domain. Position 40–47 (40–47 (GHNGSGKS)) interacts with ATP.

This sequence belongs to the ABC transporter superfamily. Energy-coupling factor EcfA family. Forms a stable energy-coupling factor (ECF) transporter complex composed of 2 membrane-embedded substrate-binding proteins (S component), 2 ATP-binding proteins (A component) and 2 transmembrane proteins (T component).

The protein localises to the cell membrane. In terms of biological role, ATP-binding (A) component of a common energy-coupling factor (ECF) ABC-transporter complex. Unlike classic ABC transporters this ECF transporter provides the energy necessary to transport a number of different substrates. The polypeptide is Energy-coupling factor transporter ATP-binding protein EcfA1 (Listeria monocytogenes serovar 1/2a (strain ATCC BAA-679 / EGD-e)).